The following is a 386-amino-acid chain: Succinate--CoA ligase [ADP-forming] subunit beta (386 aa).

Residues 9 to 244 (KEVLRKYGVA…LDEEDPKEIE (236 aa)) enclose the ATP-grasp domain. ATP contacts are provided by residues Lys46, 53-55 (GRG), Glu99, Cys102, and Glu107. Positions 199 and 213 each coordinate Mg(2+). Substrate contacts are provided by residues Asn264 and 321 to 323 (GIM).

This sequence belongs to the succinate/malate CoA ligase beta subunit family. Heterotetramer of two alpha and two beta subunits. The cofactor is Mg(2+).

It carries out the reaction succinate + ATP + CoA = succinyl-CoA + ADP + phosphate. It catalyses the reaction GTP + succinate + CoA = succinyl-CoA + GDP + phosphate. Its pathway is carbohydrate metabolism; tricarboxylic acid cycle; succinate from succinyl-CoA (ligase route): step 1/1. Succinyl-CoA synthetase functions in the citric acid cycle (TCA), coupling the hydrolysis of succinyl-CoA to the synthesis of either ATP or GTP and thus represents the only step of substrate-level phosphorylation in the TCA. The beta subunit provides nucleotide specificity of the enzyme and binds the substrate succinate, while the binding sites for coenzyme A and phosphate are found in the alpha subunit. This is Succinate--CoA ligase [ADP-forming] subunit beta from Bacillus licheniformis (strain ATCC 14580 / DSM 13 / JCM 2505 / CCUG 7422 / NBRC 12200 / NCIMB 9375 / NCTC 10341 / NRRL NRS-1264 / Gibson 46).